The sequence spans 366 residues: Beta sliding clamp (366 aa).

It belongs to the beta sliding clamp family. Forms a ring-shaped head-to-tail homodimer around DNA which binds and tethers DNA polymerases and other proteins to the DNA. The DNA replisome complex has a single clamp-loading complex (3 tau and 1 each of delta, delta', psi and chi subunits) which binds 3 Pol III cores (1 core on the leading strand and 2 on the lagging strand) each with a beta sliding clamp dimer. Additional proteins in the replisome are other copies of gamma, psi and chi, Ssb, DNA helicase and RNA primase.

It localises to the cytoplasm. Confers DNA tethering and processivity to DNA polymerases and other proteins. Acts as a clamp, forming a ring around DNA (a reaction catalyzed by the clamp-loading complex) which diffuses in an ATP-independent manner freely and bidirectionally along dsDNA. Initially characterized for its ability to contact the catalytic subunit of DNA polymerase III (Pol III), a complex, multichain enzyme responsible for most of the replicative synthesis in bacteria; Pol III exhibits 3'-5' exonuclease proofreading activity. The beta chain is required for initiation of replication as well as for processivity of DNA replication. The sequence is that of Beta sliding clamp (dnaN) from Haemophilus influenzae (strain ATCC 51907 / DSM 11121 / KW20 / Rd).